A 206-amino-acid chain; its full sequence is Sclerostin domain-containing protein 1 (206 aa).

Residues 1-23 form the signal peptide; the sequence is MLPPAIHLSLIPLLCILMRNCLA. Residues 42–62 form a disordered region; sequence AHPSSNSTLNQARNGGRHFSS. The segment covering 44-62 has biased composition (polar residues); it reads PSSNSTLNQARNGGRHFSS. Residue N47 is glycosylated (N-linked (GlcNAc...) asparagine). 4 disulfides stabilise this stretch: C75–C133, C89–C147, C100–C163, and C104–C165. A CTCK domain is found at 75-170; that stretch reads CRELRSTKYI…TACKCKRYTR (96 aa). The N-linked (GlcNAc...) asparagine glycan is linked to N173. Residues 176 to 206 are disordered; it reads SHNFESVSPAKPAQHHRERKRASKSSKHSLS. Basic residues predominate over residues 188-206; the sequence is AQHHRERKRASKSSKHSLS.

Belongs to the sclerostin family. Interacts with BMP2, BMP4, BMP6 and BMP7 with high affinity. Highly expressed in kidney at renal collecting ducts level and weakly in brain.

It localises to the secreted. Functionally, may be involved in the onset of endometrial receptivity for implantation/sensitization for the decidual cell reaction. Enhances Wnt signaling and inhibits TGF-beta signaling. Directly antagonizes activity of BMP2, BMP4, BMP6 and BMP7 in a dose-dependent manner. In Mus musculus (Mouse), this protein is Sclerostin domain-containing protein 1 (Sostdc1).